A 338-amino-acid polypeptide reads, in one-letter code: Solute carrier family 35 member G5 (338 aa).

A disordered region spans residues 1 to 28; that stretch reads MAGSHPYFNLPDSTHPSPPSGPPSLRWH. Helical transmembrane passes span 37–57, 67–87, 105–125, 160–180, 190–210, 221–241, 250–270, 281–301, and 310–330; these read TNGL…VGPL, LPSL…ALLL, CFCA…VQVV, CGLL…LWTL, ALGY…LLVY, TVAF…LFVL, LLSW…FTCV, LVCA…YYML, and IMGA…NLSC. One can recognise an EamA 1 domain in the interval 49–174; sequence LPAGFVGPLS…SILGLIIIVG (126 aa). An EamA 2 domain is found at 272 to 325; it reads YAVTKAHPALVCAVLHSEVVVALILQYYMLPETVAPSDIMGAGVVLGNITIIPA.

It belongs to the SLC35G solute transporter family.

Its subcellular location is the membrane. The protein is Solute carrier family 35 member G5 (SLC35G5) of Gorilla gorilla gorilla (Western lowland gorilla).